Consider the following 359-residue polypeptide: Phospho-N-acetylmuramoyl-pentapeptide-transferase (359 aa).

Transmembrane regions (helical) follow at residues 3–23, 55–75, 80–100, 117–137, 156–176, 187–207, 231–251, 255–275, 280–300, and 334–354; these read QILVAVTVALVVSILLTPALI, VAIVAGIWAGYLGTHLAGLAF, VSASGVLVLGLATALGGVGFL, TAKTVGQITAAVLFGVLVLQF, IATVTLAPALFVLFCMVIVSA, LDGLAAGSMAMVTAAYVLITF, LTLIAAATVGACIGFLWWNAA, IFMGDTGSLALGGVIAGLSVT, ILAVVLGSLFVAEITSVVLQI, and FWLLTAIACGLGVVLFYGEWL.

It belongs to the glycosyltransferase 4 family. MraY subfamily. Mg(2+) serves as cofactor.

The protein localises to the cell membrane. The catalysed reaction is UDP-N-acetyl-alpha-D-muramoyl-L-alanyl-gamma-D-glutamyl-meso-2,6-diaminopimeloyl-D-alanyl-D-alanine + di-trans,octa-cis-undecaprenyl phosphate = di-trans,octa-cis-undecaprenyl diphospho-N-acetyl-alpha-D-muramoyl-L-alanyl-D-glutamyl-meso-2,6-diaminopimeloyl-D-alanyl-D-alanine + UMP. It functions in the pathway cell wall biogenesis; peptidoglycan biosynthesis. Its function is as follows. Catalyzes the initial step of the lipid cycle reactions in the biosynthesis of the cell wall peptidoglycan: transfers peptidoglycan precursor phospho-MurNAc-pentapeptide from UDP-MurNAc-pentapeptide onto the lipid carrier undecaprenyl phosphate, yielding undecaprenyl-pyrophosphoryl-MurNAc-pentapeptide, known as lipid I. In Mycobacterium leprae (strain TN), this protein is Phospho-N-acetylmuramoyl-pentapeptide-transferase.